Here is a 226-residue protein sequence, read N- to C-terminus: Phosphoribosylformylglycinamidine synthase subunit PurQ (226 aa).

In terms of domain architecture, Glutamine amidotransferase type-1 spans 3–225 (FAVIVFPGSN…VKWGARHVTY (223 aa)). Cys-86 acts as the Nucleophile in catalysis. Catalysis depends on residues His-194 and Glu-196.

In terms of assembly, part of the FGAM synthase complex composed of 1 PurL, 1 PurQ and 2 PurS subunits.

It is found in the cytoplasm. It catalyses the reaction N(2)-formyl-N(1)-(5-phospho-beta-D-ribosyl)glycinamide + L-glutamine + ATP + H2O = 2-formamido-N(1)-(5-O-phospho-beta-D-ribosyl)acetamidine + L-glutamate + ADP + phosphate + H(+). The catalysed reaction is L-glutamine + H2O = L-glutamate + NH4(+). The protein operates within purine metabolism; IMP biosynthesis via de novo pathway; 5-amino-1-(5-phospho-D-ribosyl)imidazole from N(2)-formyl-N(1)-(5-phospho-D-ribosyl)glycinamide: step 1/2. Its function is as follows. Part of the phosphoribosylformylglycinamidine synthase complex involved in the purines biosynthetic pathway. Catalyzes the ATP-dependent conversion of formylglycinamide ribonucleotide (FGAR) and glutamine to yield formylglycinamidine ribonucleotide (FGAM) and glutamate. The FGAM synthase complex is composed of three subunits. PurQ produces an ammonia molecule by converting glutamine to glutamate. PurL transfers the ammonia molecule to FGAR to form FGAM in an ATP-dependent manner. PurS interacts with PurQ and PurL and is thought to assist in the transfer of the ammonia molecule from PurQ to PurL. In Exiguobacterium sp. (strain ATCC BAA-1283 / AT1b), this protein is Phosphoribosylformylglycinamidine synthase subunit PurQ.